The sequence spans 284 residues: GPN-loop GTPase 3 (284 aa).

Position 13–18 (13–18 (GSGKST)) interacts with GTP. Residues 72 to 74 (GPN) carry the Gly-Pro-Asn (GPN)-loop; involved in dimer interface motif. 174 to 177 (TKMD) lines the GTP pocket. The segment at 261–284 (KEPKEHEEESSSMFDEYFQERQNE) is disordered.

It belongs to the GPN-loop GTPase family. Heterodimer with GPN1. Binds to RNA polymerase II (RNAPII). Interacts directly with subunits RPB4 and RPB7 and the CTD of RPB1.

Its function is as follows. Small GTPase required for proper localization of RNA polymerase II (RNAPII). May act at an RNAP assembly step prior to nuclear import. The sequence is that of GPN-loop GTPase 3 from Rattus norvegicus (Rat).